Reading from the N-terminus, the 156-residue chain is Cyclic pyranopterin monophosphate synthase (156 aa).

Substrate is bound by residues 75–77 and 111–112; these read LCH and ME. Asp-126 is an active-site residue.

This sequence belongs to the MoaC family. Homohexamer; trimer of dimers.

The catalysed reaction is (8S)-3',8-cyclo-7,8-dihydroguanosine 5'-triphosphate = cyclic pyranopterin phosphate + diphosphate. It functions in the pathway cofactor biosynthesis; molybdopterin biosynthesis. Its function is as follows. Catalyzes the conversion of (8S)-3',8-cyclo-7,8-dihydroguanosine 5'-triphosphate to cyclic pyranopterin monophosphate (cPMP). This is Cyclic pyranopterin monophosphate synthase from Corynebacterium glutamicum (strain R).